A 422-amino-acid polypeptide reads, in one-letter code: BTB/POZ domain-containing protein KCTD18 (422 aa).

Residues 12-80 enclose the BTB domain; the sequence is DILRLNVGGC…YLHGEVHIPT (69 aa). Disordered regions lie at residues 289 to 357 and 376 to 422; these read VKNS…THLP and LRRT…DQTK. Residues 396 to 406 are compositionally biased toward pro residues; the sequence is PAGPPEPPPDA. Positions 413-422 are enriched in polar residues; the sequence is WTENGQDQTK.

The polypeptide is BTB/POZ domain-containing protein KCTD18 (KCTD18) (Bos taurus (Bovine)).